Reading from the N-terminus, the 526-residue chain is Bifunctional purine biosynthesis protein PurH (526 aa).

The 147-residue stretch at 1–147 folds into the MGS-like domain; it reads MSVIKRALIS…KNWKHVAIVT (147 aa).

It belongs to the PurH family.

The enzyme catalyses (6R)-10-formyltetrahydrofolate + 5-amino-1-(5-phospho-beta-D-ribosyl)imidazole-4-carboxamide = 5-formamido-1-(5-phospho-D-ribosyl)imidazole-4-carboxamide + (6S)-5,6,7,8-tetrahydrofolate. It catalyses the reaction IMP + H2O = 5-formamido-1-(5-phospho-D-ribosyl)imidazole-4-carboxamide. It functions in the pathway purine metabolism; IMP biosynthesis via de novo pathway; 5-formamido-1-(5-phospho-D-ribosyl)imidazole-4-carboxamide from 5-amino-1-(5-phospho-D-ribosyl)imidazole-4-carboxamide (10-formyl THF route): step 1/1. Its pathway is purine metabolism; IMP biosynthesis via de novo pathway; IMP from 5-formamido-1-(5-phospho-D-ribosyl)imidazole-4-carboxamide: step 1/1. This is Bifunctional purine biosynthesis protein PurH from Neisseria gonorrhoeae (strain ATCC 700825 / FA 1090).